Consider the following 227-residue polypeptide: Cytochrome c oxidase subunit 2 (227 aa).

Residues 1 to 14 (MAYPFELGFQDATS) are Mitochondrial intermembrane-facing. The helical transmembrane segment at 15 to 45 (PIMEELLHFHDHTLMIVFLISSLVLYIISLM) threads the bilayer. Residues 46–59 (LTTKLTHTSTMDAQ) lie on the Mitochondrial matrix side of the membrane. A helical transmembrane segment spans residues 60 to 87 (EVETIWTILPAIILILIALPSLRILYMM). At 88–227 (DEINDPSLTV…HFENWSSSML (140 aa)) the chain is on the mitochondrial intermembrane side. Positions 161, 196, 198, 200, 204, and 207 each coordinate Cu cation. Mg(2+) is bound at residue E198.

This sequence belongs to the cytochrome c oxidase subunit 2 family. As to quaternary structure, component of the cytochrome c oxidase (complex IV, CIV), a multisubunit enzyme composed of 14 subunits. The complex is composed of a catalytic core of 3 subunits MT-CO1, MT-CO2 and MT-CO3, encoded in the mitochondrial DNA, and 11 supernumerary subunits COX4I, COX5A, COX5B, COX6A, COX6B, COX6C, COX7A, COX7B, COX7C, COX8 and NDUFA4, which are encoded in the nuclear genome. The complex exists as a monomer or a dimer and forms supercomplexes (SCs) in the inner mitochondrial membrane with NADH-ubiquinone oxidoreductase (complex I, CI) and ubiquinol-cytochrome c oxidoreductase (cytochrome b-c1 complex, complex III, CIII), resulting in different assemblies (supercomplex SCI(1)III(2)IV(1) and megacomplex MCI(2)III(2)IV(2)). Found in a complex with TMEM177, COA6, COX18, COX20, SCO1 and SCO2. Interacts with TMEM177 in a COX20-dependent manner. Interacts with COX20. Interacts with COX16. The cofactor is Cu cation.

The protein resides in the mitochondrion inner membrane. The catalysed reaction is 4 Fe(II)-[cytochrome c] + O2 + 8 H(+)(in) = 4 Fe(III)-[cytochrome c] + 2 H2O + 4 H(+)(out). Functionally, component of the cytochrome c oxidase, the last enzyme in the mitochondrial electron transport chain which drives oxidative phosphorylation. The respiratory chain contains 3 multisubunit complexes succinate dehydrogenase (complex II, CII), ubiquinol-cytochrome c oxidoreductase (cytochrome b-c1 complex, complex III, CIII) and cytochrome c oxidase (complex IV, CIV), that cooperate to transfer electrons derived from NADH and succinate to molecular oxygen, creating an electrochemical gradient over the inner membrane that drives transmembrane transport and the ATP synthase. Cytochrome c oxidase is the component of the respiratory chain that catalyzes the reduction of oxygen to water. Electrons originating from reduced cytochrome c in the intermembrane space (IMS) are transferred via the dinuclear copper A center (CU(A)) of subunit 2 and heme A of subunit 1 to the active site in subunit 1, a binuclear center (BNC) formed by heme A3 and copper B (CU(B)). The BNC reduces molecular oxygen to 2 water molecules using 4 electrons from cytochrome c in the IMS and 4 protons from the mitochondrial matrix. The protein is Cytochrome c oxidase subunit 2 (MT-CO2) of Tamias amoenus (Yellow-pine chipmunk).